An 805-amino-acid polypeptide reads, in one-letter code: Transcription factor E2f1 (805 aa).

3 disordered regions span residues 9–45 (APIN…TTGH), 119–208 (AAAA…LRHD), and 224–255 (PASH…RNRA). Composition is skewed to low complexity over residues 12–37 (NNSN…QQHY) and 119–134 (AAAA…QLQQ). Composition is skewed to polar residues over residues 144 to 154 (RKATGKSNDIT) and 181 to 195 (HHQT…SSAP). The short motif at 147 to 161 (TGKSNDITNYYKVKR) is the PIP-box K+4 motif element. Positions 240 to 249 (AASVASSSSS) are enriched in low complexity. Residues 253–318 (NRADTSLGIL…KKSKNNIQWR (66 aa)) mediate DNA binding. A dimerization region spans residues 318-411 (RCGQSMVSQE…LPNTKLPREI (94 aa)). At serine 434 the chain carries Phosphoserine. Disordered regions lie at residues 578–650 (SLTE…QRRS) and 714–743 (GAGA…DANS). Low complexity-rich tracts occupy residues 595–615 (AAAA…NSHN) and 623–636 (SNHS…NSKS). The span at 637-647 (QPPTIGYGSSQ) shows a compositional bias: polar residues.

Belongs to the E2F/DP family. As to quaternary structure, heterodimer of E2f and Dp. Cooperates to give sequence-specific DNA binding and optimal trans-activation. Interacts with PCNA. Post-translationally, ubiquitinated by the DCX(DTL) complex, also named CRL4(CDT2) complex, leading to its degradation during S phase. Ubiquitination by the DCX(DTL) complex is essential for cell cycle control and is PCNA-dependent: interacts with PCNA via its PIP-box, while the presence of the containing the 'K+4' motif in the PIP box, recruit the DCX(DTL) complex, leading to its degradation. In terms of tissue distribution, segmentally repeated expression throughout early embryos is restricted to the ventral nerve cord in later embryos.

It is found in the nucleus. Its function is as follows. Transcriptional activator that binds to E2f sites. Required for wild-type growth in mitotic and polytene tissues, Contributes to the expression of replication genes at the G1-S transition and Cyclin E. Activates cell proliferation in wing imaginal disk, which requires expression of vg. This is Transcription factor E2f1 from Drosophila melanogaster (Fruit fly).